The following is a 668-amino-acid chain: Potassium-transporting ATPase ATP-binding subunit (668 aa).

4 helical membrane-spanning segments follow: residues 31-51, 62-82, 213-233, and 243-263; these read MFLT…PSFF, FYVA…ISTA, TVFL…IFAI, and IVML…ALLP. Catalysis depends on Asp298, which acts as the 4-aspartylphosphate intermediate. ATP contacts are provided by residues Asp335, Glu339, 367–374, and Lys385; that span reads FSSETKFS. Asp504 and Asp508 together coordinate Mg(2+). Helical transmembrane passes span 573-593, 599-619, and 644-664; these read YFVI…VNIL, IVAV…LIPL, and IGGV…LIAW.

The protein belongs to the cation transport ATPase (P-type) (TC 3.A.3) family. Type IA subfamily. In terms of assembly, the system is composed of three essential subunits: KdpA, KdpB and KdpC.

The protein localises to the cell membrane. The enzyme catalyses K(+)(out) + ATP + H2O = K(+)(in) + ADP + phosphate + H(+). In terms of biological role, part of the high-affinity ATP-driven potassium transport (or Kdp) system, which catalyzes the hydrolysis of ATP coupled with the electrogenic transport of potassium into the cytoplasm. This subunit is responsible for energy coupling to the transport system and for the release of the potassium ions to the cytoplasm. This chain is Potassium-transporting ATPase ATP-binding subunit, found in Thermoplasma volcanium (strain ATCC 51530 / DSM 4299 / JCM 9571 / NBRC 15438 / GSS1).